We begin with the raw amino-acid sequence, 453 residues long: Bifunctional protein GlmU (453 aa).

The interval 1 to 225 (MNIVILAAGT…EWETLGVNSK (225 aa)) is pyrophosphorylase. UDP-N-acetyl-alpha-D-glucosamine contacts are provided by residues 6–9 (LAAG), lysine 20, glutamine 71, 76–77 (GT), 98–100 (YGD), glycine 135, glutamate 150, asparagine 165, and asparagine 223. Aspartate 100 provides a ligand contact to Mg(2+). Mg(2+) is bound at residue asparagine 223. Residues 226–246 (AQLAELERIHQRNVADALLAD) form a linker region. An N-acetyltransferase region spans residues 247–453 (GVTLADPARI…GYVRPVKKKS (207 aa)). Positions 329 and 347 each coordinate UDP-N-acetyl-alpha-D-glucosamine. The active-site Proton acceptor is histidine 359. Residues tyrosine 362 and asparagine 373 each contribute to the UDP-N-acetyl-alpha-D-glucosamine site. Residues alanine 376, 382 to 383 (NY), serine 401, and alanine 419 each bind acetyl-CoA.

This sequence in the N-terminal section; belongs to the N-acetylglucosamine-1-phosphate uridyltransferase family. The protein in the C-terminal section; belongs to the transferase hexapeptide repeat family. Homotrimer. The cofactor is Mg(2+).

Its subcellular location is the cytoplasm. It carries out the reaction alpha-D-glucosamine 1-phosphate + acetyl-CoA = N-acetyl-alpha-D-glucosamine 1-phosphate + CoA + H(+). The enzyme catalyses N-acetyl-alpha-D-glucosamine 1-phosphate + UTP + H(+) = UDP-N-acetyl-alpha-D-glucosamine + diphosphate. The protein operates within nucleotide-sugar biosynthesis; UDP-N-acetyl-alpha-D-glucosamine biosynthesis; N-acetyl-alpha-D-glucosamine 1-phosphate from alpha-D-glucosamine 6-phosphate (route II): step 2/2. It functions in the pathway nucleotide-sugar biosynthesis; UDP-N-acetyl-alpha-D-glucosamine biosynthesis; UDP-N-acetyl-alpha-D-glucosamine from N-acetyl-alpha-D-glucosamine 1-phosphate: step 1/1. Its pathway is bacterial outer membrane biogenesis; LPS lipid A biosynthesis. Functionally, catalyzes the last two sequential reactions in the de novo biosynthetic pathway for UDP-N-acetylglucosamine (UDP-GlcNAc). The C-terminal domain catalyzes the transfer of acetyl group from acetyl coenzyme A to glucosamine-1-phosphate (GlcN-1-P) to produce N-acetylglucosamine-1-phosphate (GlcNAc-1-P), which is converted into UDP-GlcNAc by the transfer of uridine 5-monophosphate (from uridine 5-triphosphate), a reaction catalyzed by the N-terminal domain. The chain is Bifunctional protein GlmU from Burkholderia multivorans (strain ATCC 17616 / 249).